Here is a 222-residue protein sequence, read N- to C-terminus: Cytochrome b6 (222 aa).

Residues 39–59 (IFYCLGGITLVCFIIQFATGF) form a helical membrane-spanning segment. Cys42 is a binding site for heme c. Positions 93 and 107 each coordinate heme b. The next 3 membrane-spanning stretches (helical) occupy residues 97–117 (ASMM…TGGF), 123–143 (LTWM…VTGY), and 193–213 (LHTF…FLMI). Positions 194 and 209 each coordinate heme b.

This sequence belongs to the cytochrome b family. PetB subfamily. The 4 large subunits of the cytochrome b6-f complex are cytochrome b6, subunit IV (17 kDa polypeptide, PetD), cytochrome f and the Rieske protein, while the 4 small subunits are PetG, PetL, PetM and PetN. The complex functions as a dimer. The cofactor is heme b. It depends on heme c as a cofactor.

It is found in the cellular thylakoid membrane. Functionally, component of the cytochrome b6-f complex, which mediates electron transfer between photosystem II (PSII) and photosystem I (PSI), cyclic electron flow around PSI, and state transitions. The chain is Cytochrome b6 from Rippkaea orientalis (strain PCC 8801 / RF-1) (Cyanothece sp. (strain PCC 8801)).